The sequence spans 397 residues: Phosphopentomutase (397 aa).

Mn(2+) contacts are provided by aspartate 10, aspartate 296, histidine 301, aspartate 337, histidine 338, and histidine 349.

This sequence belongs to the phosphopentomutase family. Mn(2+) is required as a cofactor.

The protein resides in the cytoplasm. It carries out the reaction 2-deoxy-alpha-D-ribose 1-phosphate = 2-deoxy-D-ribose 5-phosphate. It catalyses the reaction alpha-D-ribose 1-phosphate = D-ribose 5-phosphate. The protein operates within carbohydrate degradation; 2-deoxy-D-ribose 1-phosphate degradation; D-glyceraldehyde 3-phosphate and acetaldehyde from 2-deoxy-alpha-D-ribose 1-phosphate: step 1/2. In terms of biological role, isomerase that catalyzes the conversion of deoxy-ribose 1-phosphate (dRib-1-P) and ribose 1-phosphate (Rib-1-P) to deoxy-ribose 5-phosphate (dRib-5-P) and ribose 5-phosphate (Rib-5-P), respectively. The sequence is that of Phosphopentomutase from Elusimicrobium minutum (strain Pei191).